We begin with the raw amino-acid sequence, 630 residues long: Very-long-chain aldehyde decarbonylase GL1-7 (630 aa).

4 consecutive transmembrane segments (helical) span residues 93–113 (LYLDDQIILNGLLFYLGYAII), 126–146 (GALITILLHMGPVEFLYYWFH), 185–205 (FLLFSISILPPIFMGCGSVLA), and 325–345 (VWYMWMLWPVAWLSMVLAWIY). The Fatty acid hydroxylase domain maps to 133 to 272 (LHMGPVEFLY…MPFYDYIYNT (140 aa)).

Belongs to the sterol desaturase family. Homodimer. As to expression, expressed in panicles at low levels.

It is found in the endoplasmic reticulum membrane. The catalysed reaction is a long-chain fatty aldehyde + 2 NADPH + O2 + H(+) = a long-chain alkane + formate + 2 NADP(+) + H2O. Aldehyde decarbonylase involved in the conversion of aldehydes to alkanes. Core component of a very-long-chain alkane synthesis complex. The polypeptide is Very-long-chain aldehyde decarbonylase GL1-7 (Oryza sativa subsp. japonica (Rice)).